Here is a 148-residue protein sequence, read N- to C-terminus: Gas vesicle protein J (148 aa).

Disordered stretches follow at residues Met1–Thr21 and Glu118–Ala148. Residues Val136 to Ala148 show a composition bias toward polar residues.

This sequence belongs to the gas vesicle GvpA family. In terms of assembly, interacts with GvpA.

The protein resides in the gas vesicle. A minor component of the gas vesicle, might be involved in nucleating gas vesicle formation. Gas vesicles (GV) are hollow, gas filled proteinaceous nanostructures. During planktonic growth they allow positioning of the organism at a favorable depth for light or nutrient acquisition. Functionally, cluster expression in E.coli (gvpA1-gvpA2-gvpC-gvpN-gvpJ-gvpK-gvpF-gvpG-gvpV-gvpW) allows cells to float and produces irregularly shaped gas vesicles. This is Gas vesicle protein J from Nostoc sp. (strain PCC 7120 / SAG 25.82 / UTEX 2576).